A 106-amino-acid polypeptide reads, in one-letter code: Small ribosomal subunit protein uS10 (106 aa).

Belongs to the universal ribosomal protein uS10 family. As to quaternary structure, part of the 30S ribosomal subunit.

Functionally, involved in the binding of tRNA to the ribosomes. In Hyphomonas neptunium (strain ATCC 15444), this protein is Small ribosomal subunit protein uS10.